Consider the following 97-residue polypeptide: Putative defensin-like protein 240 (97 aa).

Residues 1–23 (MRYTTSFIVFCFYIFLFTNLVQG) form the signal peptide. Cystine bridges form between cysteine 29–cysteine 88, cysteine 39–cysteine 69, cysteine 47–cysteine 85, and cysteine 67–cysteine 87.

The protein belongs to the DEFL family.

It is found in the secreted. This Arabidopsis thaliana (Mouse-ear cress) protein is Putative defensin-like protein 240 (SCRL18).